The following is a 329-amino-acid chain: Fructose-1,6-bisphosphatase class 1 (329 aa).

Residues Glu-84, Asp-103, Leu-105, and Asp-106 each contribute to the Mg(2+) site. Substrate contacts are provided by residues 106–109, Asn-196, and Lys-262; that span reads DGSS. Glu-268 serves as a coordination point for Mg(2+).

This sequence belongs to the FBPase class 1 family. As to quaternary structure, homotetramer. Mg(2+) is required as a cofactor.

It is found in the cytoplasm. The catalysed reaction is beta-D-fructose 1,6-bisphosphate + H2O = beta-D-fructose 6-phosphate + phosphate. It functions in the pathway carbohydrate biosynthesis; gluconeogenesis. The protein is Fructose-1,6-bisphosphatase class 1 of Shewanella halifaxensis (strain HAW-EB4).